The chain runs to 321 residues: MIDFRPFYQQIATTNLSDWLETLPCQLKEWETQTHGDYAKWSKIVDFLPNLHADEIDLKSAVKSDRTSPLSEGEKQRIIHHLKQLMPWRKGPYHLFGIHVDCEWRSDFKWDRVLPHLSPLQGRTILDVGCGSGYHMWRMVGEGAKMVVGIDPTELFLCQFEAVRKLLNNDRRANLIPLGIEQMQPLAAFDTVFSMGVLYHRKSPLDHLSQLKNQLVKGGELVLETLVVDGDINTVLVPADRYAKMKNVYFIPSVATLINWLEKVGFTNVRCVDVATTTLEEQRKTDWLENESLIDFLDPNDHSKTIEGYQAPKRAVILANK.

Carboxy-S-adenosyl-L-methionine is bound by residues Lys90, Trp104, Lys109, Gly129, 151–153 (DPT), 180–181 (IE), Met195, Tyr199, and Arg314.

The protein belongs to the class I-like SAM-binding methyltransferase superfamily. CmoB family. As to quaternary structure, homotetramer.

It carries out the reaction carboxy-S-adenosyl-L-methionine + 5-hydroxyuridine(34) in tRNA = 5-carboxymethoxyuridine(34) in tRNA + S-adenosyl-L-homocysteine + H(+). Functionally, catalyzes carboxymethyl transfer from carboxy-S-adenosyl-L-methionine (Cx-SAM) to 5-hydroxyuridine (ho5U) to form 5-carboxymethoxyuridine (cmo5U) at position 34 in tRNAs. The polypeptide is tRNA U34 carboxymethyltransferase (Haemophilus influenzae (strain ATCC 51907 / DSM 11121 / KW20 / Rd)).